Reading from the N-terminus, the 236-residue chain is 2-C-methyl-D-erythritol 4-phosphate cytidylyltransferase (236 aa).

This sequence belongs to the IspD/TarI cytidylyltransferase family. IspD subfamily.

It catalyses the reaction 2-C-methyl-D-erythritol 4-phosphate + CTP + H(+) = 4-CDP-2-C-methyl-D-erythritol + diphosphate. Its pathway is isoprenoid biosynthesis; isopentenyl diphosphate biosynthesis via DXP pathway; isopentenyl diphosphate from 1-deoxy-D-xylulose 5-phosphate: step 2/6. Its function is as follows. Catalyzes the formation of 4-diphosphocytidyl-2-C-methyl-D-erythritol from CTP and 2-C-methyl-D-erythritol 4-phosphate (MEP). This Symbiobacterium thermophilum (strain DSM 24528 / JCM 14929 / IAM 14863 / T) protein is 2-C-methyl-D-erythritol 4-phosphate cytidylyltransferase.